The primary structure comprises 363 residues: Outer membrane porin F (363 aa).

The first 22 residues, 1–22 (MMKRKILAAVIPALLAAATANA), serve as a signal peptide directing secretion.

This sequence belongs to the Gram-negative porin family. In terms of assembly, homotrimer. Forms mixed heterotrimers with OmpC and with PhoE; other mixed heterotrimers with other porins are also probable.

It is found in the cell outer membrane. In terms of biological role, forms pores that allow passive diffusion of small molecules across the outer membrane. The protein is Outer membrane porin F of Salmonella typhimurium (strain SL1344).